The primary structure comprises 446 residues: Mannan endo-1,6-alpha-mannosidase DCW1 (446 aa).

The first 18 residues, methionine 1–glycine 18, serve as a signal peptide directing secretion. Asparagine 31, asparagine 81, asparagine 106, asparagine 200, asparagine 222, asparagine 237, asparagine 262, asparagine 278, asparagine 285, asparagine 334, asparagine 391, and asparagine 397 each carry an N-linked (GlcNAc...) asparagine glycan. Positions proline 389 to proline 408 are disordered. Serine 422 is lipidated: GPI-anchor amidated serine. A propeptide spans arginine 423–tyrosine 446 (removed in mature form).

This sequence belongs to the glycosyl hydrolase 76 family.

The protein localises to the secreted. Its subcellular location is the cell wall. It localises to the cell membrane. It carries out the reaction Random hydrolysis of (1-&gt;6)-alpha-D-mannosidic linkages in unbranched (1-&gt;6)-mannans.. Functionally, required for normal synthesis of the cell wall. The chain is Mannan endo-1,6-alpha-mannosidase DCW1 (DCW1) from Candida glabrata (strain ATCC 2001 / BCRC 20586 / JCM 3761 / NBRC 0622 / NRRL Y-65 / CBS 138) (Yeast).